Reading from the N-terminus, the 586-residue chain is NADH-quinone oxidoreductase subunit C/D 2 (586 aa).

Positions 1 to 173 (MKWVNKGTVE…RTDPPSHDFE (173 aa)) are NADH dehydrogenase I subunit C. The interval 197-586 (AELVLNWGPL…LDPVVGETDR (390 aa)) is NADH dehydrogenase I subunit D.

In the N-terminal section; belongs to the complex I 30 kDa subunit family. It in the C-terminal section; belongs to the complex I 49 kDa subunit family. As to quaternary structure, NDH-1 is composed of 13 different subunits. Subunits NuoB, CD, E, F, and G constitute the peripheral sector of the complex.

It is found in the cell inner membrane. It catalyses the reaction a quinone + NADH + 5 H(+)(in) = a quinol + NAD(+) + 4 H(+)(out). Its function is as follows. NDH-1 shuttles electrons from NADH, via FMN and iron-sulfur (Fe-S) centers, to quinones in the respiratory chain. The immediate electron acceptor for the enzyme in this species is believed to be ubiquinone. Couples the redox reaction to proton translocation (for every two electrons transferred, four hydrogen ions are translocated across the cytoplasmic membrane), and thus conserves the redox energy in a proton gradient. This Aquifex aeolicus (strain VF5) protein is NADH-quinone oxidoreductase subunit C/D 2 (nuoC2).